A 158-amino-acid chain; its full sequence is Snaclec alboaggregin-D subunit alpha (158 aa).

Positions 1–23 (MGRFIFGSFGLLVVFLSLSGTGA) are cleaved as a signal peptide. 3 cysteine pairs are disulfide-bonded: C27/C38, C55/C152, and C127/C144. In terms of domain architecture, C-type lectin spans 34-153 (YDRYCYQAFS…CAELNPFICK (120 aa)).

This sequence belongs to the snaclec family. In terms of assembly, tetramer of heterodimers of alpha and beta subunits (alphabeta)(4); disulfide-linked. In terms of tissue distribution, expressed by the venom gland.

It is found in the secreted. Snaclec that induces human platelet aggregation in the absence of any cofactor with the EC(50) of 0.25 nM and causes tyrosine phosphorylation in human platelets. Antibodies against either platelet GPIbalpha (GP1BA) or GPVI (GP6) inhibit alboaggregin D-induced platelet aggregation. Only the combination of these two antibodies completely inhibit aggregation, suggesting that it acts through both GPIbalpha (GP1BA) and GPVI (GP6). The chain is Snaclec alboaggregin-D subunit alpha from Trimeresurus albolabris (White-lipped pit viper).